A 140-amino-acid chain; its full sequence is Natriuretic peptides B (140 aa).

The first 26 residues, 1–26 (MEPCAALPRALLLLLFLHLSPLGGRP), serve as a signal peptide directing secretion. The segment at 71 to 94 (LEPLHRSHSPAEAPEAGGTPRGVL) is disordered. An intrachain disulfide couples C118 to C134.

This sequence belongs to the natriuretic peptide family. Post-translationally, the precursor molecule is proteolytically cleaved by the endoproteases FURIN or CORIN at Arg-108 to produce the brain natriuretic peptide 32. CORIN also cleaves the precursor molecule at additional residues including Arg-105, Arg-108 and possibly Lys-111. Undergoes further proteolytic cleavage by various proteases such as DPP4, MME and possibly FAP, to give rise to a variety of shorter peptides. Cleaved at Pro-110 by the prolyl endopeptidase FAP (seprase) activity (in vitro). Degraded by IDE. During IDE degradation, the resulting products initially increase the activation of NPR1 and can also stimulate NPR2 to produce cGMP before the fragments are completely degraded and inactivated by IDE (in vitro). Brain and also in atria, but at much lower levels than ANP.

It localises to the secreted. Its function is as follows. Cardiac hormone that plays a key role in mediating cardio-renal homeostasis. May also function as a paracrine antifibrotic factor in the heart. Acts by specifically binding and stimulating NPR1 to produce cGMP, which in turn activates effector proteins that drive various biological responses. Involved in regulating the extracellular fluid volume and maintaining the fluid-electrolyte balance through natriuresis, diuresis, vasorelaxation, and inhibition of renin and aldosterone secretion. Binds the clearance receptor NPR3. Functionally, may affect cardio-renal homeostasis. Able to promote the production of cGMP although its potency is very low compared to brain natriuretic peptide 32. This is Natriuretic peptides B (NPPB) from Canis lupus familiaris (Dog).